A 506-amino-acid chain; its full sequence is NAD(P)H-quinone oxidoreductase chain 4, chloroplastic (506 aa).

Transmembrane regions (helical) follow at residues 5–25 (FPLL…IPFL), 35–55 (WYTL…FIYK), 88–108 (MPLI…AWPI), 114–134 (LFYF…LSQD), 135–155 (ILLF…LLSL), 168–188 (FILY…TMAF), 209–229 (ALEI…LPAF), 243–263 (HYST…YGLI), 275–295 (VIFS…GALT), 309–329 (SSIS…DLGL), 331–351 (GAMM…FLAG), 386–406 (SLAL…LGFL), 415–435 (FIAL…IYLL), and 463–483 (IFIM…PNLT).

It belongs to the complex I subunit 4 family.

It is found in the plastid. Its subcellular location is the chloroplast thylakoid membrane. It carries out the reaction a plastoquinone + NADH + (n+1) H(+)(in) = a plastoquinol + NAD(+) + n H(+)(out). The catalysed reaction is a plastoquinone + NADPH + (n+1) H(+)(in) = a plastoquinol + NADP(+) + n H(+)(out). The sequence is that of NAD(P)H-quinone oxidoreductase chain 4, chloroplastic from Chaetosphaeridium globosum (Charophycean green alga).